An 830-amino-acid chain; its full sequence is WD repeat-containing protein 75 (830 aa).

WD repeat units follow at residues 4 to 42, 46 to 85, 89 to 130, 144 to 183, 192 to 230, 236 to 275, 278 to 317, 323 to 361, and 375 to 422; these read EGVRVVRCGGSRLNFRRAVFSVDSKYIFCVSGDFVKVYS, EECVHILHGHTDLVSGILVNPSNHLQLYSCSFDGTIKLWD, GILI…QLVS, RQLTFVLDYINRSPKCIAFGNEGEYVAAVRDFYLSVYFFK, LPSTKNKKNAKNKFTCVACHPKEDCIASGHMDGKIRLWR, QKYTYTCLHWHHDMVMDLAFTVTGTSLLSGGRECVLVEWR, SEKNKEFLPRLGSSIEHISVSPAGDLFCTSHSDNKITVIH, SAVIQGLVKDRSISTGLMVDPRTKALVLNGKPGHLQFYS, and QQEY…KLWN. Lys-426 is covalently cross-linked (Glycyl lysine isopeptide (Lys-Gly) (interchain with G-Cter in SUMO2)). WD repeat units lie at residues 429–473, 486–524, 528–568, and 573–610; these read GFVL…KVWI, AWTCDFVGSYHKYQATNCCFSEDGSLLAVSFEEIVTIWD, WELK…CCWN, and SIQWSAKLNVRVMEPDPYSDHVAAVAQSSAGSDLFVFK. A phosphoserine mark is found at Ser-663 and Ser-671. A Glycyl lysine isopeptide (Lys-Gly) (interchain with G-Cter in SUMO2) cross-link involves residue Lys-675. The interval 761–807 is disordered; it reads KSAEEVPDDVDMEGNKESDDSDEEYDLTEKDKETNNNTDLGEDAIHQ. Residues Ser-778 and Ser-781 each carry the phosphoserine modification. Phosphotyrosine is present on Tyr-785. Ser-811 is modified (phosphoserine).

In terms of assembly, component of the proposed t-UTP subcomplex of the ribosomal small subunit (SSU) processome. SSU processome is composed of more than 70 proteins and the RNA chaperone small nucleolar RNA (snoRNA) U3.

The protein resides in the nucleus. It localises to the nucleolus. Ribosome biogenesis factor. Part of the small subunit (SSU) processome, first precursor of the small eukaryotic ribosomal subunit. During the assembly of the SSU processome in the nucleolus, many ribosome biogenesis factors, an RNA chaperone and ribosomal proteins associate with the nascent pre-rRNA and work in concert to generate RNA folding, modifications, rearrangements and cleavage as well as targeted degradation of pre-ribosomal RNA by the RNA exosome. Involved in nucleolar processing of pre-18S ribosomal RNA. Required for optimal pre-ribosomal RNA transcription by RNA polymerase I. In Mus musculus (Mouse), this protein is WD repeat-containing protein 75 (Wdr75).